The following is a 496-amino-acid chain: Glutamate--tRNA ligase (496 aa).

Residues 12-22 (PSPTGTPHVGL) carry the 'HIGH' region motif. A 'KMSKS' region motif is present at residues 256-260 (KLSKR). Lysine 259 contacts ATP.

Belongs to the class-I aminoacyl-tRNA synthetase family. Glutamate--tRNA ligase type 1 subfamily. As to quaternary structure, monomer.

It is found in the cytoplasm. The catalysed reaction is tRNA(Glu) + L-glutamate + ATP = L-glutamyl-tRNA(Glu) + AMP + diphosphate. Its function is as follows. Catalyzes the attachment of glutamate to tRNA(Glu) in a two-step reaction: glutamate is first activated by ATP to form Glu-AMP and then transferred to the acceptor end of tRNA(Glu). The protein is Glutamate--tRNA ligase of Mycobacteroides abscessus (strain ATCC 19977 / DSM 44196 / CCUG 20993 / CIP 104536 / JCM 13569 / NCTC 13031 / TMC 1543 / L948) (Mycobacterium abscessus).